A 716-amino-acid chain; its full sequence is Dynein axonemal intermediate chain 7 (716 aa).

It belongs to the DNAI7 family. In terms of assembly, part of the multisubunit axonemal dynein complex formed at least of two heavy chains and a number of intermediate and light chains. Interacts with tubulin. Associates with microtubule. Post-translationally, ubiquitinated. Ubiquitination leads to its degradation through the 26S proteasome. Ubiquitin-proteasome-mediated DNAI7 degradation occurs in mitosis.

Its subcellular location is the cell projection. The protein localises to the cilium. It is found in the cytoplasm. Via its association with the multisubunit axonemal dynein complex, is potentially involved in the regulation of cilia function. May also act as a cell cycle regulator. This Homo sapiens (Human) protein is Dynein axonemal intermediate chain 7.